The following is a 104-amino-acid chain: Large ribosomal subunit protein uL24 (104 aa).

Belongs to the universal ribosomal protein uL24 family. Part of the 50S ribosomal subunit.

In terms of biological role, one of two assembly initiator proteins, it binds directly to the 5'-end of the 23S rRNA, where it nucleates assembly of the 50S subunit. Functionally, one of the proteins that surrounds the polypeptide exit tunnel on the outside of the subunit. This Citrobacter koseri (strain ATCC BAA-895 / CDC 4225-83 / SGSC4696) protein is Large ribosomal subunit protein uL24.